Reading from the N-terminus, the 74-residue chain is MKLLNILNYKALGLSLLYLALILVTFQISMGSYGEDEPQAGSILMVAGLIFSIIGVFLLMKFKPTYILWEKLKR.

2 helical membrane-spanning segments follow: residues 11 to 31 (ALGLSLLYLALILVTFQISMG) and 40 to 60 (AGSILMVAGLIFSIIGVFLLM).

Belongs to the PceB family.

The protein localises to the cell inner membrane. Functionally, may act as a membrane anchor for the tetrachloroethene reductive dehalogenase PceA. The sequence is that of Probable tetrachloroethene reductive dehalogenase membrane anchor protein from Sulfurospirillum multivorans (Dehalospirillum multivorans).